A 318-amino-acid polypeptide reads, in one-letter code: NF-kappa-B inhibitor alpha (318 aa).

The interval 1–44 is disordered; that stretch reads MLSAHRPAEPPAVEGCEPPRKERQGGLLPPDDRHDSGLDSMKEE. The span at 17-44 shows a compositional bias: basic and acidic residues; that stretch reads EPPRKERQGGLLPPDDRHDSGLDSMKEE. Lysine 21 participates in a covalent cross-link: Glycyl lysine isopeptide (Lys-Gly) (interchain with G-Cter in ubiquitin). At serine 36 the chain carries Phosphoserine; by IKKA and IKKB. Residue serine 40 is modified to Phosphoserine; by IKKA, IKKB and IKKE. At tyrosine 46 the chain carries Phosphotyrosine; by Tyr-kinases. ANK repeat units follow at residues 114 to 143, 147 to 176, 186 to 215, and 220 to 249; these read LSQTPLHLAVITDQAEIAEHLLKAGCDLDV, RGNTPLHIACQQGSLRSVSVLTQHCQPHHL, NGHTCLHLASIQGYLAVVEYLLSLGADVNA, and NGRTALHLAVDLQNSDLVSLLVKHGPDVNK.

This sequence belongs to the NF-kappa-B inhibitor family. Post-translationally, phosphorylated at Ser-36 and Ser-40 by IKKA/CHUK and IKKB/IKBKB; disables inhibition of NF-kappa-B DNA-binding activity. Phosphorylation at positions 36 and 40 is prerequisite to polyubiquitination and subsequent degradation. In terms of processing, monoubiquitinated at Lys-21 following phosphorylation at Ser-36 and Ser-40. The resulting polyubiquitination leads to protein degradation. Hydroxylated by HIF1AN. Highly expressed in lymph node, thymus followed by liver, brain, muscle, kidney, gastrointestinal and reproductive tract.

It localises to the cytoplasm. The protein localises to the nucleus. Inhibits the activity of dimeric NF-kappa-B/REL complexes by trapping REL (RELA/p65 and NFKB1/p50) dimers in the cytoplasm by masking their nuclear localization signals. On cellular stimulation by immune and pro-inflammatory responses, becomes phosphorylated promoting ubiquitination and degradation, enabling the dimeric RELA to translocate to the nucleus and activate transcription. The chain is NF-kappa-B inhibitor alpha (NFKBIA) from Gallus gallus (Chicken).